A 593-amino-acid chain; its full sequence is MRVSRLLLVTLRDVPAEAEIASHQLLLRGGYIRRIGSGIYGYLPLMWKVIQRITAIVRDELNTAGAQETLLPQLHPAELWQRSGRWQGYTAGEGIMFHLEDRQGRELGLGPTHEEVVTSLAGELLQSYKQLPVNLYQVQTKFRDEIRPRFGLMRGREFIMKDAYSFHANEADLQNTYLEMDQAYRRIFERCGLAAVPVDADSGAIGGAASQEFMVTADAGEDLILLSDDGTYAANQEKAISTPSKAIPLEGASMELISTPDETSIDVLCRSHGWHQSQLIKVLLFIARLDDGVEQPLLISLRGDQDLNEVKLINAVGRLSGQEVLDCRPIQTEDLNKQGIDTIPLGFIGPDLDDGVLRSARSWTKQFLRCTDSTAAAMDRMVCGANQPDQHRLYATWADLGGAPKSLDLRKARAGEACVHNPEAHLIEKRGIEVGHIFQLGRKYSEAMDSRFTNEAGKTEHFWMGCYGIGISRLAQAAVEQHHDDAGICWPAAIAPYEAIVVVANMQDQTQAELGESLYKQLLAAGVDALFDDRKERAGVKFKDADLIGIPWRVVVGRDASDGVVELVERANRAVQKLPHADALKELLRTLRP.

Belongs to the class-II aminoacyl-tRNA synthetase family. ProS type 1 subfamily. As to quaternary structure, homodimer.

Its subcellular location is the cytoplasm. It carries out the reaction tRNA(Pro) + L-proline + ATP = L-prolyl-tRNA(Pro) + AMP + diphosphate. Catalyzes the attachment of proline to tRNA(Pro) in a two-step reaction: proline is first activated by ATP to form Pro-AMP and then transferred to the acceptor end of tRNA(Pro). As ProRS can inadvertently accommodate and process non-cognate amino acids such as alanine and cysteine, to avoid such errors it has two additional distinct editing activities against alanine. One activity is designated as 'pretransfer' editing and involves the tRNA(Pro)-independent hydrolysis of activated Ala-AMP. The other activity is designated 'posttransfer' editing and involves deacylation of mischarged Ala-tRNA(Pro). The misacylated Cys-tRNA(Pro) is not edited by ProRS. The protein is Proline--tRNA ligase of Synechococcus sp. (strain CC9902).